The chain runs to 130 residues: Histone H2B.2 (130 aa).

The span at 1-19 (MAPKAEKKPASKAPAEKKP) shows a compositional bias: basic and acidic residues. A disordered region spans residues 1 to 38 (MAPKAEKKPASKAPAEKKPAAKKTASTDGAKKRTKARK). An N6-acetyllysine; alternate mark is found at Lys7 and Lys8. Glycyl lysine isopeptide (Lys-Gly) (interchain with G-Cter in SUMO); alternate cross-links involve residues Lys7 and Lys8. At Ser11 the chain carries Phosphoserine. Lys12 carries the post-translational modification N6-acetyllysine. Lys17 carries the N6-acetyllysine; alternate modification. Lys17 is covalently cross-linked (Glycyl lysine isopeptide (Lys-Gly) (interchain with G-Cter in SUMO); alternate). Lys18 participates in a covalent cross-link: Glycyl lysine isopeptide (Lys-Gly) (interchain with G-Cter in SUMO). Lys124 participates in a covalent cross-link: Glycyl lysine isopeptide (Lys-Gly) (interchain with G-Cter in ubiquitin).

The protein belongs to the histone H2B family. In terms of assembly, the nucleosome is a histone octamer containing two molecules each of H2A, H2B, H3 and H4 assembled in one H3-H4 heterotetramer and two H2A-H2B heterodimers. The octamer wraps approximately 147 bp of DNA. Monoubiquitinated by the UBC2-BRE1 complex to form H2BK123ub1. H2BK123ub1 gives a specific tag for epigenetic transcriptional activation and is also prerequisite for H3K4me and H3K79me formation. H2BK123ub1 also modulates the formation of double-strand breaks during meiosis and is a prerequisite for DNA-damage checkpoint activation. Post-translationally, phosphorylated by STE20 to form H2BS10ph during progression through meiotic prophase. May be correlated with chromosome condensation. In terms of processing, acetylated by GCN5 to form H2BK11ac and H2BK16ac. H2BK16ac can also be formed by ESA1. Acetylation of N-terminal lysines and particularly formation of H2BK11acK16ac has a positive effect on transcription. Sumoylation to form H2BK6su or H2BK7su, and probably also H2BK16su or H2BK17su, occurs preferentially near the telomeres and represses gene transcription.

It localises to the nucleus. The protein resides in the chromosome. Its function is as follows. Core component of nucleosome. Nucleosomes wrap and compact DNA into chromatin, limiting DNA accessibility to the cellular machineries which require DNA as a template. Histones thereby play a central role in transcription regulation, DNA repair, DNA replication and chromosomal stability. DNA accessibility is regulated via a complex set of post-translational modifications of histones, also called histone code, and nucleosome remodeling. This chain is Histone H2B.2 (HTB2), found in Candida albicans (strain SC5314 / ATCC MYA-2876) (Yeast).